The chain runs to 311 residues: Homoserine kinase (311 aa).

ATP is bound at residue 96 to 106; sequence PLARGLGSSAA.

This sequence belongs to the GHMP kinase family. Homoserine kinase subfamily.

Its subcellular location is the cytoplasm. The enzyme catalyses L-homoserine + ATP = O-phospho-L-homoserine + ADP + H(+). It functions in the pathway amino-acid biosynthesis; L-threonine biosynthesis; L-threonine from L-aspartate: step 4/5. In terms of biological role, catalyzes the ATP-dependent phosphorylation of L-homoserine to L-homoserine phosphate. The protein is Homoserine kinase of Natranaerobius thermophilus (strain ATCC BAA-1301 / DSM 18059 / JW/NM-WN-LF).